A 494-amino-acid chain; its full sequence is Cytochrome P450 71D94 (494 aa).

The helical; Signal-anchor for type II membrane protein transmembrane segment at 1 to 21 (MELNLLLVIIILVATYTVSLL) threads the bilayer. C434 lines the heme pocket.

This sequence belongs to the cytochrome P450 family. Requires heme as cofactor.

Its subcellular location is the endoplasmic reticulum membrane. Cytochrome P450 oxygenase of undefined substrate. Not active with limonene, (+)- or (-)-piperitone, (-)-isopiperitone, piperitenone or (+)-pulegone. This is Cytochrome P450 71D94 (CYP71D94) from Mentha gracilis (Gingermint).